The following is a 474-amino-acid chain: Solute carrier family 49 member A3 (474 aa).

A disordered region spans residues 1–20 (MEGESAETEPLIQSSSAADR). 12 consecutive transmembrane segments (helical) span residues 38–58 (WFIL…WLTF), 69–89 (LCVS…AAVV), 105–126 (CSLI…CGVL), 134–154 (VFAV…LVIF), 175–195 (LASM…PLIV), 201–221 (LFLL…LATL), 258–278 (WILL…STLL), 290–310 (GFAG…AFLL), 326–346 (ICMC…QLPA), 349–369 (VLLV…YPVG), 388–408 (LIFT…QALA), and 428–448 (VPVL…VVFF).

Belongs to the major facilitator superfamily.

The protein resides in the membrane. The polypeptide is Solute carrier family 49 member A3 (slc49a3) (Danio rerio (Zebrafish)).